The primary structure comprises 193 residues: Peptidyl-tRNA hydrolase (193 aa).

Tyr-17 lines the tRNA pocket. His-22 serves as the catalytic Proton acceptor. TRNA is bound by residues Tyr-69, Asn-71, and Asn-117.

Belongs to the PTH family. As to quaternary structure, monomer.

The protein localises to the cytoplasm. The enzyme catalyses an N-acyl-L-alpha-aminoacyl-tRNA + H2O = an N-acyl-L-amino acid + a tRNA + H(+). In terms of biological role, hydrolyzes ribosome-free peptidyl-tRNAs (with 1 or more amino acids incorporated), which drop off the ribosome during protein synthesis, or as a result of ribosome stalling. Functionally, catalyzes the release of premature peptidyl moieties from peptidyl-tRNA molecules trapped in stalled 50S ribosomal subunits, and thus maintains levels of free tRNAs and 50S ribosomes. The sequence is that of Peptidyl-tRNA hydrolase from Leifsonia xyli subsp. xyli (strain CTCB07).